We begin with the raw amino-acid sequence, 157 residues long: uncharacterized protein (157 aa).

One can recognise an N-acetyltransferase domain in the interval 9-154 (LLINYKTLDE…ETNSNAITNE (146 aa)).

This is an uncharacterized protein from Bacillus mycoides (strain KBAB4) (Bacillus weihenstephanensis).